Consider the following 316-residue polypeptide: Beta-lactamase 3 (316 aa).

A signal peptide spans 1-29 (MFVLNKFFTNSHYKKIVPVVLLSCATLIG). Cysteine 30 is lipidated: N-palmitoyl cysteine. The S-diacylglycerol cysteine moiety is linked to residue cysteine 30. The interval 34–53 (NTQSESNKQTNQTNQVKQEN) is disordered. The segment covering 40–50 (NKQTNQTNQVK) has biased composition (low complexity). Serine 95 (acyl-ester intermediate) is an active-site residue. Glutamate 191 (proton acceptor) is an active-site residue. Residue 257-259 (KTG) coordinates substrate.

It belongs to the class-A beta-lactamase family.

Its subcellular location is the cell membrane. The enzyme catalyses a beta-lactam + H2O = a substituted beta-amino acid. This chain is Beta-lactamase 3 (blaZ), found in Bacillus cereus.